The primary structure comprises 1325 residues: RIMS-binding protein 2 (1325 aa).

A disordered region spans residues 153–181; sequence TFLSKSRSDTPRCRFDSDMDNDQNSNTSK. A compositionally biased stretch (basic and acidic residues) spans 158–169; it reads SRSDTPRCRFDS. Residues 186 to 253 enclose the SH3 1 domain; it reads GKVHLCIARY…PSNFVDFVQD (68 aa). 3 consecutive Fibronectin type-III domains span residues 315-408, 411-493, and 507-608; these read VPYP…GKDV, APSN…KKEA, and PPQD…VPPS. 3 disordered regions span residues 601–778, 988–1010, and 1040–1090; these read SDLL…GSDL, DLGSSFVEPRSEQVKSSYEKKYE, and AAGP…SRPM. Positions 627–641 are enriched in basic and acidic residues; it reads ETKEEHLGPHLKIDE. Polar residues predominate over residues 664–676; sequence FPSSLQGRRSPSP. Positions 696–716 are enriched in basic and acidic residues; sequence MAREAAQRVAESNRMERRSVF. Residues 717–727 are compositionally biased toward polar residues; the sequence is SERSNAAQYAN. 2 stretches are compositionally biased toward basic and acidic residues: residues 763-774 and 996-1010; these read CHGEDYHTESSR and PRSEQVKSSYEKKYE. SH3 domains follow at residues 1121–1189 and 1225–1292; these read ISTR…EIQA and VSTR…EVPD.

This sequence belongs to the RIMBP family. As to quaternary structure, interacts with RIMS1, RIMS2, CACNA1D and CACNA1B, and potentially with other Ca(2+) channel alpha-1 isoforms. Brain, cochlea and retina.

It localises to the cell membrane. Its subcellular location is the synapse. Its function is as follows. Plays a role in the synaptic transmission as bifunctional linker that interacts simultaneously with RIMS1, RIMS2, CACNA1D and CACNA1B. The protein is RIMS-binding protein 2 (RIMBP2) of Gallus gallus (Chicken).